Consider the following 445-residue polypeptide: Ubiquitin carboxyl-terminal hydrolase MINDY-3 (445 aa).

The Nucleophile role is filled by C51. Position 125 is a phosphoserine (S125). H287 (proton acceptor) is an active-site residue.

The protein belongs to the MINDY deubiquitinase family. FAM188 subfamily. Interacts with COPS5.

It localises to the nucleus. It catalyses the reaction Thiol-dependent hydrolysis of ester, thioester, amide, peptide and isopeptide bonds formed by the C-terminal Gly of ubiquitin (a 76-residue protein attached to proteins as an intracellular targeting signal).. Hydrolase that can remove 'Lys-48'-linked conjugated ubiquitin from proteins. The protein is Ubiquitin carboxyl-terminal hydrolase MINDY-3 (MINDY3) of Bos taurus (Bovine).